The following is a 101-amino-acid chain: uncharacterized protein (101 aa).

2 helical membrane passes run 3–23 (IIGS…AIIF) and 68–88 (VIVL…IIVI).

It is found in the cell membrane. This is an uncharacterized protein from Ureaplasma parvum serovar 3 (strain ATCC 700970).